Reading from the N-terminus, the 195-residue chain is Protein GrpE (195 aa).

Belongs to the GrpE family. Homodimer.

Its subcellular location is the cytoplasm. In terms of biological role, participates actively in the response to hyperosmotic and heat shock by preventing the aggregation of stress-denatured proteins, in association with DnaK and GrpE. It is the nucleotide exchange factor for DnaK and may function as a thermosensor. Unfolded proteins bind initially to DnaJ; upon interaction with the DnaJ-bound protein, DnaK hydrolyzes its bound ATP, resulting in the formation of a stable complex. GrpE releases ADP from DnaK; ATP binding to DnaK triggers the release of the substrate protein, thus completing the reaction cycle. Several rounds of ATP-dependent interactions between DnaJ, DnaK and GrpE are required for fully efficient folding. This Francisella tularensis subsp. holarctica (strain OSU18) protein is Protein GrpE.